The chain runs to 88 residues: uncharacterized protein (88 aa).

Residues 1–31 are disordered; that stretch reads MIPRDPRSPAPDLSAINQPAGRAERRSGPAT.

This is an uncharacterized protein from Escherichia coli.